We begin with the raw amino-acid sequence, 371 residues long: Forkhead box protein J1.2 (371 aa).

Disordered regions lie at residues 45–74 (ANSR…APRT) and 80–99 (VAVP…PVQE). Positions 109 to 203 (KPPYSYATLI…VNGVLKRRRM (95 aa)) form a DNA-binding region, fork-head. The tract at residues 228-248 (PSSHHMQHISGGHRQSRRYEK) is disordered.

It belongs to the FOXJ1 family. Expressed diffusely through much of gastrula and neurula stage embryos. At stage 23 (late neurula), limited to the otic vesicle. By stage 28 (tailbud), also expressed transiently in the presumptive nephrostomes of the pronephros. At stage 35 (early tadpole), expressed broadly in the head and strongly expressed in the developing gill structures.

It is found in the nucleus. Functionally, key transcription factor required for motile ciliogenesis. Activates genes essential for motile cilia formation and function. The protein is Forkhead box protein J1.2 of Xenopus tropicalis (Western clawed frog).